The chain runs to 312 residues: Ubiquinone biosynthesis O-methyltransferase, mitochondrial (312 aa).

A mitochondrion-targeting transit peptide spans 1-32 (MLLRSRFLKVIHVRKQLSACSRFAIQTQTRCK). Residues arginine 68, glycine 130, aspartate 153, and methionine 196 each coordinate S-adenosyl-L-methionine. Residues glutamate 197, glutamate 200, and histidine 201 each coordinate Mg(2+).

The protein belongs to the class I-like SAM-binding methyltransferase superfamily. UbiG/COQ3 family. In terms of assembly, component of a multi-subunit COQ enzyme complex, composed of at least COQ3, COQ4, COQ5, COQ6, COQ7 and COQ9. Interacts directly with COQ4. The cofactor is Mg(2+).

It localises to the mitochondrion inner membrane. The enzyme catalyses 3,4-dihydroxy-5-(all-trans-hexaprenyl)benzoate + S-adenosyl-L-methionine = 4-hydroxy-3-methoxy-5-(all-trans-hexaprenyl)benzoate + S-adenosyl-L-homocysteine + H(+). The catalysed reaction is a 3-demethylubiquinone + S-adenosyl-L-methionine = a ubiquinone + S-adenosyl-L-homocysteine. It carries out the reaction 3-demethylubiquinol-6 + S-adenosyl-L-methionine = ubiquinol-6 + S-adenosyl-L-homocysteine + H(+). It functions in the pathway cofactor biosynthesis; ubiquinone biosynthesis. With respect to regulation, regulated in response to catabolite repression. Its function is as follows. O-methyltransferase required for two non-consecutive steps during ubiquinone biosynthesis. Catalyzes the 2 O-methylation of 3,4-dihydroxy-5-(all-trans-hexaprenyl)benzoic acid into 4-hydroxy-3-methoxy-5-(all-trans-hexaprenyl)benzoic acid. Also catalyzes the last step of ubiquinone biosynthesis by mediating methylation of 3-demethylubiquinone into ubiquinone. Also able to mediate the methylation of 3-demethylubiquinol-6 into ubiquinol-6. This Saccharomyces cerevisiae (strain ATCC 204508 / S288c) (Baker's yeast) protein is Ubiquinone biosynthesis O-methyltransferase, mitochondrial.